Consider the following 670-residue polypeptide: Solute carrier organic anion transporter family member 1A2 (670 aa).

At 1–20 the chain is on the cytoplasmic side; that stretch reads MGETEKRIETHRIRCLSKLK. The chain crosses the membrane as a helical span at residues 21–40; the sequence is MFLLAITCAFVSKTLSGSYM. The Extracellular portion of the chain corresponds to 41 to 59; that stretch reads NSMLTQIERQFNIPTSLVG. Residues 60-80 traverse the membrane as a helical segment; sequence FINGSFEIGNLLLIIFVSYFG. Topologically, residues 81–86 are cytoplasmic; the sequence is TKLHRP. Residues 87-111 traverse the membrane as a helical segment; it reads IMIGIGCVVMGLGCFLKSLPHFLMN. At 112–155 the chain is on the extracellular side; the sequence is QYEYESTVSVSGNLSSNSFLCMENGTQILRPTQDPSECTKEVKS. N-linked (GlcNAc...) asparagine glycosylation is found at Asn-124 and Asn-135. A helical membrane pass occupies residues 156–184; the sequence is LMWVYVLVGNIVRGMGETPILPLGISYIE. The Cytoplasmic segment spans residues 185 to 203; it reads DFAKFENSPLYIGLVETGA. The chain crosses the membrane as a helical span at residues 204–224; it reads IIGPLIGLLLASFCANVYVDT. Residues 225–242 are Extracellular-facing; the sequence is GFVNTDDLIITPTDTRWV. A helical transmembrane segment spans residues 243-267; it reads GAWWFGFLICAGVNVLTAIPFFFLP. Topologically, residues 268–311 are cytoplasmic; the sequence is NTLPKEGLETNADIIKNENEDKQKEEVKKEKYGITKDFLPFMKS. The helical transmembrane segment at 312-333 threads the bilayer; the sequence is LSCNPIYMLFILVSVIQFNAFV. Topologically, residues 334 to 353 are extracellular; the sequence is NMISFMPKYLEQQYGISSSD. A helical transmembrane segment spans residues 354–377; that stretch reads AIFLMGIYNLPPICIGYIIGGLIM. At 378–381 the chain is on the cytoplasmic side; sequence KKFK. Residues 382 to 405 form a helical membrane-spanning segment; sequence ITVKQAAHIGCWLSLLEYLLYFLS. Residues 406–513 are Extracellular-facing; sequence FLMTCENSSV…PDCSLMLQYF (108 aa). N-linked (GlcNAc...) asparagine glycans are attached at residues Asn-412 and Asn-419. The Kazal-like domain maps to 433–488; that stretch reads NDIFADCNVDCNCPSKIWDPVCGNNGLSYLSACLAGCETSIGTGINMVFQNCSCIQ. Disulfide bonds link Cys-439–Cys-469, Cys-445–Cys-465, and Cys-454–Cys-486. A helical membrane pass occupies residues 514 to 536; that stretch reads LILSAMSSFIYSLAAIPGYMVLL. At 537–545 the chain is on the cytoplasmic side; sequence RCMKSEEKS. A helical membrane pass occupies residues 546-571; sequence LGVGLHTFCTRVFAGIPAPIYFGALM. At 572-605 the chain is on the extracellular side; sequence DSTCLHWGTLKCGESGACRIYDSTTFRYIYLGLP. A helical transmembrane segment spans residues 606–623; that stretch reads AALRGSSFVPALIILILL. Over 624 to 670 the chain is Cytoplasmic; that stretch reads RKCHLPGENASSGTELIETKVKGKENECKDIYQKSTVLKDDELKTKL.

It belongs to the organo anion transporter (TC 2.A.60) family. In terms of tissue distribution, higher expression in the brain than in liver and kidney. Expressed in brain neurons in both cortex and hippocampus. Expressed in placental trophoblasts. Also expressed in lung and testes at lower levels. Expressed in the eye (at protein level). Expressed in the retina in the outer and inner nuclear layers, the inner plexiform layer and the ganglion cell layer. Expressed in liver and prostate. In testis, primarily localized to the basal membrane of Sertoli cells and weakly expressed in Leydig cells and within the tubules. Expressed in fetal brain and liver.

Its subcellular location is the cell membrane. It localises to the basal cell membrane. The enzyme catalyses taurocholate(out) = taurocholate(in). It catalyses the reaction glycocholate(out) = glycocholate(in). It carries out the reaction taurochenodeoxycholate(out) = taurochenodeoxycholate(in). The catalysed reaction is tauroursodeoxycholate(out) = tauroursodeoxycholate(in). The enzyme catalyses dehydroepiandrosterone 3-sulfate(out) = dehydroepiandrosterone 3-sulfate(in). It catalyses the reaction estrone 3-sulfate(out) = estrone 3-sulfate(in). It carries out the reaction 3,3',5'-triiodo-L-thyronine(out) = 3,3',5'-triiodo-L-thyronine(in). The catalysed reaction is L-thyroxine(out) = L-thyroxine(in). The enzyme catalyses taurodeoxycholate(out) = taurodeoxycholate(in). It catalyses the reaction glycodeoxycholate(out) = glycodeoxycholate(in). It carries out the reaction glycochenodeoxycholate(out) = glycochenodeoxycholate(in). The catalysed reaction is glycoursodeoxycholate(out) = glycoursodeoxycholate(in). The enzyme catalyses 17beta-estradiol 17-O-(beta-D-glucuronate)(out) = 17beta-estradiol 17-O-(beta-D-glucuronate)(in). It catalyses the reaction prostaglandin E2(out) = prostaglandin E2(in). It carries out the reaction substance P(out) = substance P(in). Its activity is regulated as follows. Transport activity is inhibited by the grapefruit juice component naringin. Its function is as follows. Na(+)-independent transporter that mediates the cellular uptake of a broad range of organic anions such as the endogenous bile salts cholate and deoxycholate, either in their unconjugated or conjugated forms (taurocholate and glycocholate), at the plasmam membrane. Responsible for intestinal absorption of bile acids. Transports dehydroepiandrosterone 3-sulfate (DHEAS), a major circulating steroid secreted by the adrenal cortex, as well as estrone 3-sulfate and 17beta-estradiol 17-O-(beta-D-glucuronate). Mediates apical uptake of all-trans-retinol (atROL) across human retinal pigment epithelium, which is essential to maintaining the integrity of the visual cycle and thus vision. Involved in the uptake of clinically used drugs. Capable of thyroid hormone transport (both T3 or 3,3',5'-triiodo-L-thyronine, and T4 or L-tyroxine). Also transports prostaglandin E2. Plays roles in blood-brain and -cerebrospinal fluid barrier transport of organic anions and signal mediators, and in hormone uptake by neural cells. May also play a role in the reuptake of neuropeptides such as substance P/TAC1 and vasoactive intestinal peptide/VIP released from retinal neurons. May play an important role in plasma and tissue distribution of the structurally diverse chemotherapeutic drugs methotrexate and paclitaxel. Shows a pH-sensitive substrate specificity which may be ascribed to the protonation state of the binding site and leads to a stimulation of substrate transport in an acidic microenvironment. Hydrogencarbonate/HCO3(-) acts as the probable counteranion that exchanges for organic anions. May contribute to regulate the transport of organic compounds in testis across the blood-testis-barrier. This Homo sapiens (Human) protein is Solute carrier organic anion transporter family member 1A2 (SLCO1A2).